A 557-amino-acid chain; its full sequence is Copine-4 (557 aa).

C2 domains lie at K3–L131 and T137–E264. 5 residues coordinate Ca(2+): D170, D176, D232, D234, and D240. Residues Q305–P507 enclose the VWFA domain.

This sequence belongs to the copine family. In terms of assembly, interacts (via VWFA domain) with ACTB, BCOR, BICD2, CCDC22, CDC42BPB, CEP162, MYCBP2, NONO, PDCD6, PITPNM2, RDX, SKIL, SKT, SPTBN1, UBE2O and WTAP. Requires Ca(2+) as cofactor.

Probable calcium-dependent phospholipid-binding protein that may play a role in calcium-mediated intracellular processes. The chain is Copine-4 from Mus musculus (Mouse).